A 300-amino-acid chain; its full sequence is 4-hydroxy-tetrahydrodipicolinate synthase (300 aa).

Thr-57 provides a ligand contact to pyruvate. Residue Tyr-145 is the Proton donor/acceptor of the active site. The active-site Schiff-base intermediate with substrate is Lys-173. Ile-213 contributes to the pyruvate binding site.

The protein belongs to the DapA family. Homotetramer; dimer of dimers.

The protein localises to the cytoplasm. It carries out the reaction L-aspartate 4-semialdehyde + pyruvate = (2S,4S)-4-hydroxy-2,3,4,5-tetrahydrodipicolinate + H2O + H(+). The protein operates within amino-acid biosynthesis; L-lysine biosynthesis via DAP pathway; (S)-tetrahydrodipicolinate from L-aspartate: step 3/4. Its function is as follows. Catalyzes the condensation of (S)-aspartate-beta-semialdehyde [(S)-ASA] and pyruvate to 4-hydroxy-tetrahydrodipicolinate (HTPA). In Corynebacterium urealyticum (strain ATCC 43042 / DSM 7109), this protein is 4-hydroxy-tetrahydrodipicolinate synthase.